Reading from the N-terminus, the 296-residue chain is Lipoyl synthase (296 aa).

[4Fe-4S] cluster is bound by residues Cys-37, Cys-42, Cys-48, Cys-63, Cys-67, Cys-70, and Ser-276. The 217-residue stretch at 49–265 (WSKKHTTVMI…ERLAKTKGFL (217 aa)) folds into the Radical SAM core domain.

The protein belongs to the radical SAM superfamily. Lipoyl synthase family. It depends on [4Fe-4S] cluster as a cofactor.

It localises to the cytoplasm. It catalyses the reaction [[Fe-S] cluster scaffold protein carrying a second [4Fe-4S](2+) cluster] + N(6)-octanoyl-L-lysyl-[protein] + 2 oxidized [2Fe-2S]-[ferredoxin] + 2 S-adenosyl-L-methionine + 4 H(+) = [[Fe-S] cluster scaffold protein] + N(6)-[(R)-dihydrolipoyl]-L-lysyl-[protein] + 4 Fe(3+) + 2 hydrogen sulfide + 2 5'-deoxyadenosine + 2 L-methionine + 2 reduced [2Fe-2S]-[ferredoxin]. The protein operates within protein modification; protein lipoylation via endogenous pathway; protein N(6)-(lipoyl)lysine from octanoyl-[acyl-carrier-protein]: step 2/2. Catalyzes the radical-mediated insertion of two sulfur atoms into the C-6 and C-8 positions of the octanoyl moiety bound to the lipoyl domains of lipoate-dependent enzymes, thereby converting the octanoylated domains into lipoylated derivatives. The polypeptide is Lipoyl synthase (Rickettsia rickettsii (strain Iowa)).